A 141-amino-acid chain; its full sequence is Large ribosomal subunit protein uL14 (141 aa).

Belongs to the universal ribosomal protein uL14 family. As to quaternary structure, part of the 50S ribosomal subunit. Forms a cluster with proteins L3 and L24e, part of which may contact the 16S rRNA in 2 intersubunit bridges.

Functionally, binds to 23S rRNA. Forms part of two intersubunit bridges in the 70S ribosome. In Pyrococcus abyssi (strain GE5 / Orsay), this protein is Large ribosomal subunit protein uL14.